Here is a 219-residue protein sequence, read N- to C-terminus: PRELI domain-containing protein 1, mitochondrial (219 aa).

The PRELI/MSF1 domain maps to 36-174 (TEDIVHREVT…ILAKLQGEAP (139 aa)).

Forms a complex with TRIAP1 in the mitochondrion intermembrane space. Interacts with OPA1 and AIFM1.

It localises to the mitochondrion. Its subcellular location is the mitochondrion intermembrane space. The enzyme catalyses a 1,2-diacyl-sn-glycero-3-phosphate(in) = a 1,2-diacyl-sn-glycero-3-phosphate(out). Functionally, involved in the modulation of the mitochondrial apoptotic pathway by ensuring the accumulation of cardiolipin (CL) in mitochondrial membranes. In vitro, the TRIAP1:PRELID1 complex mediates the transfer of phosphatidic acid (PA) between liposomes and probably functions as a PA transporter across the mitochondrion intermembrane space to provide PA for CL synthesis in the inner membrane. Regulates the mitochondrial apoptotic pathway in primary Th cells. Regulates Th cell differentiation by down-regulating STAT6 thereby reducing IL-4-induced Th2 cell number. May be important for the development of vital and immunocompetent organs. The polypeptide is PRELI domain-containing protein 1, mitochondrial (PRELID1) (Bos taurus (Bovine)).